Here is a 134-residue protein sequence, read N- to C-terminus: Transcription antitermination protein NusB (134 aa).

Belongs to the NusB family.

Involved in transcription antitermination. Required for transcription of ribosomal RNA (rRNA) genes. Binds specifically to the boxA antiterminator sequence of the ribosomal RNA (rrn) operons. This chain is Transcription antitermination protein NusB, found in Shewanella amazonensis (strain ATCC BAA-1098 / SB2B).